The primary structure comprises 256 residues: Undecaprenyl-diphosphatase (256 aa).

Helical transmembrane passes span 1–21 (MDIFHAIILGIVEGLTEFLPV), 41–61 (FHKTFEISIQLGSILAVLALF), 69–89 (VDIWLKLAVAFIPTGALGFLL), 96–116 (LFAPSTVAYALILGGIVFLVL), 172–192 (VAAEFSFLLALPTMFIATGYD), 207–227 (ALGVGFVVAFIFAMIAVKGFL), and 233–253 (FNFVPFGIYRIILGIIFLFYL).

The protein belongs to the UppP family.

Its subcellular location is the cell inner membrane. It carries out the reaction di-trans,octa-cis-undecaprenyl diphosphate + H2O = di-trans,octa-cis-undecaprenyl phosphate + phosphate + H(+). Catalyzes the dephosphorylation of undecaprenyl diphosphate (UPP). Confers resistance to bacitracin. This chain is Undecaprenyl-diphosphatase, found in Wolinella succinogenes (strain ATCC 29543 / DSM 1740 / CCUG 13145 / JCM 31913 / LMG 7466 / NCTC 11488 / FDC 602W) (Vibrio succinogenes).